Reading from the N-terminus, the 130-residue chain is Small ribosomal subunit protein uS8 (130 aa).

Belongs to the universal ribosomal protein uS8 family. Part of the 30S ribosomal subunit.

Its function is as follows. One of the primary rRNA binding proteins, it binds directly to 16S rRNA central domain where it helps coordinate assembly of the platform of the 30S subunit. The polypeptide is Small ribosomal subunit protein uS8 (Methanobrevibacter smithii (strain ATCC 35061 / DSM 861 / OCM 144 / PS)).